Consider the following 227-residue polypeptide: Enolase-phosphatase E1 (227 aa).

Mg(2+)-binding residues include Asp-11 and Glu-13. Residues 118-119 (SS) and Lys-161 each bind substrate. Asp-186 lines the Mg(2+) pocket.

This sequence belongs to the HAD-like hydrolase superfamily. MasA/MtnC family. Monomer. It depends on Mg(2+) as a cofactor.

The protein localises to the cytoplasm. Its subcellular location is the nucleus. The catalysed reaction is 5-methylsulfanyl-2,3-dioxopentyl phosphate + H2O = 1,2-dihydroxy-5-(methylsulfanyl)pent-1-en-3-one + phosphate. It participates in amino-acid biosynthesis; L-methionine biosynthesis via salvage pathway; L-methionine from S-methyl-5-thio-alpha-D-ribose 1-phosphate: step 3/6. Its pathway is amino-acid biosynthesis; L-methionine biosynthesis via salvage pathway; L-methionine from S-methyl-5-thio-alpha-D-ribose 1-phosphate: step 4/6. In terms of biological role, bifunctional enzyme that catalyzes the enolization of 2,3-diketo-5-methylthiopentyl-1-phosphate (DK-MTP-1-P) into the intermediate 2-hydroxy-3-keto-5-methylthiopentenyl-1-phosphate (HK-MTPenyl-1-P), which is then dephosphorylated to form the acireductone 1,2-dihydroxy-3-keto-5-methylthiopentene (DHK-MTPene). The sequence is that of Enolase-phosphatase E1 from Saccharomyces cerevisiae (strain RM11-1a) (Baker's yeast).